Reading from the N-terminus, the 367-residue chain is Flagellar P-ring protein (367 aa).

The signal sequence occupies residues 1–21 (MYVFKALAGIVLALVATLAHA).

This sequence belongs to the FlgI family. In terms of assembly, the basal body constitutes a major portion of the flagellar organelle and consists of four rings (L,P,S, and M) mounted on a central rod.

Its subcellular location is the periplasm. It is found in the bacterial flagellum basal body. Functionally, assembles around the rod to form the L-ring and probably protects the motor/basal body from shearing forces during rotation. The chain is Flagellar P-ring protein from Salmonella arizonae (strain ATCC BAA-731 / CDC346-86 / RSK2980).